The following is a 429-amino-acid chain: 3-phosphoshikimate 1-carboxyvinyltransferase (429 aa).

The 3-phosphoshikimate site is built by lysine 23, serine 24, and arginine 28. Lysine 23 contributes to the phosphoenolpyruvate binding site. The phosphoenolpyruvate site is built by glycine 94 and arginine 126. Residues serine 171, serine 172, glutamine 173, serine 199, aspartate 316, asparagine 339, and lysine 343 each coordinate 3-phosphoshikimate. Glutamine 173 contributes to the phosphoenolpyruvate binding site. Aspartate 316 serves as the catalytic Proton acceptor. Phosphoenolpyruvate contacts are provided by arginine 347, arginine 389, and lysine 414.

This sequence belongs to the EPSP synthase family. In terms of assembly, monomer.

It is found in the cytoplasm. It carries out the reaction 3-phosphoshikimate + phosphoenolpyruvate = 5-O-(1-carboxyvinyl)-3-phosphoshikimate + phosphate. The protein operates within metabolic intermediate biosynthesis; chorismate biosynthesis; chorismate from D-erythrose 4-phosphate and phosphoenolpyruvate: step 6/7. Its function is as follows. Catalyzes the transfer of the enolpyruvyl moiety of phosphoenolpyruvate (PEP) to the 5-hydroxyl of shikimate-3-phosphate (S3P) to produce enolpyruvyl shikimate-3-phosphate and inorganic phosphate. The polypeptide is 3-phosphoshikimate 1-carboxyvinyltransferase (Idiomarina loihiensis (strain ATCC BAA-735 / DSM 15497 / L2-TR)).